We begin with the raw amino-acid sequence, 808 residues long: Zinc finger protein 148 (808 aa).

2 disordered regions span residues 15-86 and 131-162; these read SPVG…ISQD and DSLI…SPAK. Residues 56–73 are compositionally biased toward acidic residues; that stretch reads AEDDDDEDEEEDDDDDLA. Positions 150–159 are enriched in basic residues; sequence HKKKKRKQRS. 4 consecutive C2H2-type zinc fingers follow at residues 180–202, 208–230, 236–258, and 264–287; these read HICE…VFIH, FQCN…EKIH, FRCD…KRTH, and YQCD…RMCH. 3 disordered regions span residues 305-338, 596-617, and 705-736; these read RTPE…ASIT, SINS…QAPP, and SFSG…DPQS. Polar residues-rich tracts occupy residues 705 to 718 and 725 to 736; these read SFSG…SVSP and QVTSPKKTDPQS.

The protein belongs to the krueppel C2H2-type zinc-finger protein family.

The protein resides in the nucleus. Involved in transcriptional regulation. Represses the transcription of a number of genes. Required for primitive and definitive hematopoiesis during embryonic development. The polypeptide is Zinc finger protein 148 (znf148) (Danio rerio (Zebrafish)).